The chain runs to 807 residues: Leucine--tRNA ligase (807 aa).

Positions 40 to 51 (PYPSGQGLHVGH) match the 'HIGH' region motif. Positions 575-579 (KMSKS) match the 'KMSKS' region motif. Residue lysine 578 coordinates ATP.

The protein belongs to the class-I aminoacyl-tRNA synthetase family.

It is found in the cytoplasm. The catalysed reaction is tRNA(Leu) + L-leucine + ATP = L-leucyl-tRNA(Leu) + AMP + diphosphate. This Latilactobacillus sakei subsp. sakei (strain 23K) (Lactobacillus sakei subsp. sakei) protein is Leucine--tRNA ligase.